Reading from the N-terminus, the 58-residue chain is Small ribosomal subunit protein bS21A (58 aa).

The disordered stretch occupies residues 38 to 58 (YEKPSLRRKRKAEAARKGGRN). Residues 49–58 (AEAARKGGRN) are compositionally biased toward basic and acidic residues.

It belongs to the bacterial ribosomal protein bS21 family.

The protein is Small ribosomal subunit protein bS21A of Trichormus variabilis (strain ATCC 29413 / PCC 7937) (Anabaena variabilis).